The following is a 1264-amino-acid chain: MSTLYVSPHPDAFPSLRALIAARYGEAGEGPGWGGAHPRICLQPPPTSRTPFPPPRLPALEQGPGGLWVWGATAVAQLLWPAGLGGPGGSRAAVLVQQWVSYADTELIPAACGATLPALGLRSSAQDPQAVLGALGRALSPLEEWLRLHTYLAGEAPTLADLAAVTALLLPFRYVLDPPARRIWNNVTRWFVTCVRQPEFRAVLGEVVLYSGARPLSHQPGPEAPALPKTAAQLKKEAKKREKLEKFQQKQKIQQQQPPPGEKKPKPEKREKRDPGVITYDLPTPPGEKKDVSGPMPDSYSPRYVEAAWYPWWEQQGFFKPEYGRPNVSAANPRGVFMMCIPPPNVTGSLHLGHALTNAIQDSLTRWHRMRGETTLWNPGCDHAGIATQVVVEKKLWREQGLSRHQLGREAFLQEVWKWKEEKGDRIYHQLKKLGSSLDWDRACFTMDPKLSAAVTEAFVRLHEEGIIYRSTRLVNWSCTLNSAISDIEVDKKELTGRTLLSVPGYKEKVEFGVLVSFAYKVQGSDSDEEVVVATTRIETMLGDVAVAVHPKDTRYQHLKGKNVIHPFLSRSLPIVFDEFVDMDFGTGAVKITPAHDQNDYEVGQRHGLEAISIMDSRGALINVPPPFLGLPRFEARKAVLVALKERGLFRGIEDNPMVVPLCNRSKDVVEPLLRPQWYVRCGEMAQAASAAVTRGDLRILPEAHQRTWHAWMDNIREWCISRQLWWGHRIPAYFVTVSDPAVPPGEDPDGRYWVSGRNEAEAREKAAKEFGVSPDKISLQQDEDVLDTWFSSGLFPLSILGWPNQSEDLSVFYPGTLLETGHDILFFWVARMVMLGLKLTGRLPFREVYLHAIVRDAHGRKMSKSLGNVIDPLDVIYGISLQGLHNQLLNSNLDPSEVEKAKEGQKADFPAGIPECGTDALRFGLCAYMSQGRDINLDVNRILGYRHFCNKLWNATKFALRGLGKGFVPSPTSQPGGHESLVDRWIRSRLTEAVRLSNQGFQAYDFPAVTTAQYSFWLYELCDVYLECLKPVLNGVDQVAAECARQTLYTCLDVGLRLLSPFMPFVTEELFQRLPRRMPQAPPSLCVTPYPEPSECSWKDPEAEAALELALSITRAVRSLRADYNLTRIRPDCFLEVADEATGALASAVSGYVQALASAGVVAVLALGAPAPQGCAVALASDRCSIHLQLQGLVDPARELGKLQAKRVEAQRQAQRLRERRAASGYPVKVPLEVQEADEAKLQQTEAELRKVDEAIALFQKML.

The residue at position 2 (S2) is an N-acetylserine. Positions 89–219 (GSRAAVLVQQ…YSGARPLSHQ (131 aa)) constitute a GST C-terminal domain. Residues 217–296 (SHQPGPEAPA…GEKKDVSGPM (80 aa)) form a disordered region. Basic and acidic residues-rich tracts occupy residues 234–248 (LKKEAKKREKLEKFQ) and 261–275 (GEKKPKPEKREKRDP). A 'HIGH' region motif is present at residues 344-354 (PNVTGSLHLGH). 2 positions are modified to phosphoserine: S437 and S527. K645 is modified (N6-acetyllysine). The short motif at 862-866 (KMSKS) is the 'KMSKS' region element. K865 contributes to the ATP binding site.

Belongs to the class-I aminoacyl-tRNA synthetase family. Forms high-molecular-mass aggregates with elongation factor 1.

The catalysed reaction is tRNA(Val) + L-valine + ATP = L-valyl-tRNA(Val) + AMP + diphosphate. Can be regulated by protein kinase C-dependent phosphorylation. Catalyzes the attachment of valine to tRNA(Val). This Homo sapiens (Human) protein is Valine--tRNA ligase.